A 505-amino-acid chain; its full sequence is 2,3-bisphosphoglycerate-independent phosphoglycerate mutase (505 aa).

The Mn(2+) site is built by aspartate 12 and serine 62. Serine 62 serves as the catalytic Phosphoserine intermediate. Substrate-binding positions include histidine 123, 153 to 154 (RD), arginine 185, arginine 191, 257 to 260 (RPDR), and lysine 330. Residues aspartate 397, histidine 401, aspartate 438, histidine 439, and histidine 456 each coordinate Mn(2+).

Belongs to the BPG-independent phosphoglycerate mutase family. In terms of assembly, monomer. Requires Mn(2+) as cofactor.

The enzyme catalyses (2R)-2-phosphoglycerate = (2R)-3-phosphoglycerate. It participates in carbohydrate degradation; glycolysis; pyruvate from D-glyceraldehyde 3-phosphate: step 3/5. In terms of biological role, catalyzes the interconversion of 2-phosphoglycerate and 3-phosphoglycerate. This chain is 2,3-bisphosphoglycerate-independent phosphoglycerate mutase, found in Staphylococcus saprophyticus subsp. saprophyticus (strain ATCC 15305 / DSM 20229 / NCIMB 8711 / NCTC 7292 / S-41).